A 108-amino-acid chain; its full sequence is Large ribosomal subunit protein uL23 (108 aa).

It belongs to the universal ribosomal protein uL23 family. In terms of assembly, part of the 50S ribosomal subunit. Contacts protein L29, and trigger factor when it is bound to the ribosome.

Its function is as follows. One of the early assembly proteins it binds 23S rRNA. One of the proteins that surrounds the polypeptide exit tunnel on the outside of the ribosome. Forms the main docking site for trigger factor binding to the ribosome. This chain is Large ribosomal subunit protein uL23, found in Leptothrix cholodnii (strain ATCC 51168 / LMG 8142 / SP-6) (Leptothrix discophora (strain SP-6)).